A 1137-amino-acid chain; its full sequence is Ribonucleoside-diphosphate reductase large subunit (1137 aa).

A disordered region spans residues 1 to 32 (MASRPAASSPVEARAPVGGQEAGGPSAATQGE). Positions 64–84 (SYRISDNNFVQCGSNCTMIID) match the RIP homotypic interaction motif (RHIM) motif. Disordered regions lie at residues 124–159 (GGTPRRSAGTSTGTQTADVPTEALGGPPPPPRFTLG) and 173–315 (AVFG…YPVP). A compositionally biased stretch (polar residues) spans 131-141 (AGTSTGTQTAD). Residues 196 to 206 (SDSDDSEDTDS) are compositionally biased toward acidic residues. A compositionally biased stretch (low complexity) spans 281–290 (AGAGLAADPA). Residues 291–304 (VARDDAEGLSDPRP) show a composition bias toward basic and acidic residues. Residues T566, 581-582 (SC), G612, 791-795 (NLCTE), and 968-972 (PTAAS) contribute to the substrate site. Cysteines 582 and 808 form a disulfide. Catalysis depends on N791, which acts as the Proton acceptor. Residue C793 is the Cysteine radical intermediate of the active site. Catalysis depends on E795, which acts as the Proton acceptor.

This sequence belongs to the ribonucleoside diphosphate reductase large chain family. In terms of assembly, heterotetramer composed of a homodimer of the large subunit (R1) and a homodimer of the small subunit (R2). Larger multisubunit protein complex are also active, composed of (R1)n(R2)n. Self-assembles (via RIP homotypic interaction motif/RHIM) into homomeric fibrillar amyloid structures. Interacts (via RHIM) with human RIPK1 (via RHIM). Interacts (via RHIM) with human RIPK3 (via RHIM); the interaction leads to heteromeric amyloid assemblies. Interacts (via RHIM) with human ZBP1 (via RHIM); the interaction leads to heteromeric amyloid assemblies. Interacts (via C-terminus) with host CASP8.

The enzyme catalyses a 2'-deoxyribonucleoside 5'-diphosphate + [thioredoxin]-disulfide + H2O = a ribonucleoside 5'-diphosphate + [thioredoxin]-dithiol. Functionally, ribonucleoside-diphosphate reductase holoenzyme that provides the precursors necessary for viral DNA synthesis. Allows virus growth in non-dividing cells, as well as reactivation from latency in infected hosts. Catalyzes the biosynthesis of deoxyribonucleotides from the corresponding ribonucleotides. Prevents host necroptosis by targeting host RIPK1 and RIPK3, thereby hampering the formation of necroptotic RIPK1-RIPK3 complexes. Forms hetero-amyloid structures with host proteins RIPK3 or ZBP1 which may prevent RIPK3- and ZBP1-mediated necroptosis. In addition, inhibits extrinsic apoptosis by targeting host CASP8. In Human herpesvirus 1 (strain 17) (HHV-1), this protein is Ribonucleoside-diphosphate reductase large subunit.